Here is a 332-residue protein sequence, read N- to C-terminus: Cysteine and histidine-rich domain-containing protein 1 (332 aa).

Position 2 is an N-acetylalanine (Ala-2). Residues 2–77 (ALLCYNRGCG…KPPEPVKPEV (76 aa)) are interaction with PPP5C. Residues Cys-5, Cys-10, Cys-24, His-27, Cys-42, and Cys-43 each coordinate Zn(2+). CHORD domains follow at residues 5–64 (CYNR…KGRH) and 157–216 (CKNG…TGKH). Thr-47 is subject to Phosphothreonine. Ser-51 carries the phosphoserine modification. Cys-59, His-64, Cys-157, Cys-162, Cys-176, His-179, Cys-194, Cys-195, Cys-211, and His-216 together coordinate Zn(2+). A disordered region spans residues 61–82 (KGRHNSEKPPEPVKPEVKTTEK). Over residues 64–82 (HNSEKPPEPVKPEVKTTEK) the composition is skewed to basic and acidic residues. Residues 65–316 (NSEKPPEPVK…AEPMQWASLE (252 aa)) are interaction with HSP90AA1 and HSP90AB1. A CS domain is found at 227–316 (VVPCRHDWHQ…AEPMQWASLE (90 aa)).

As to quaternary structure, interacts with HSP90AA1, HSP90AB1, PPP5C, ROCK1 and ROCK2.

In terms of biological role, regulates centrosome duplication, probably by inhibiting the kinase activity of ROCK2. Proposed to act as co-chaperone for HSP90. May play a role in the regulation of NOD1 via a HSP90 chaperone complex. In vitro, has intrinsic chaperone activity. This function may be achieved by inhibiting association of ROCK2 with NPM1. Plays a role in ensuring the localization of the tyrosine kinase receptor EGFR to the plasma membrane, and thus ensures the subsequent regulation of EGFR activity and EGF-induced actin cytoskeleton remodeling. Involved in stress response. Prevents tumorigenesis. The protein is Cysteine and histidine-rich domain-containing protein 1 (CHORDC1) of Sus scrofa (Pig).